We begin with the raw amino-acid sequence, 487 residues long: NADH-quinone oxidoreductase subunit N (487 aa).

Transmembrane regions (helical) follow at residues 8–28 (LIAMLPLLIVGLTVVVVMLSI), 35–55 (FINATLTVIGLNLALLSLYFV), 78–98 (GLVIIASLATSTFAYPWLVGY), 104–124 (EFYLLVLIAALGGILLASANH), 125–145 (LASLFLGIELLTLPLFGLIGY), 159–179 (YMLLSAAASSFLLFGMALLYA), 203–223 (ILAGLGMMIVGLGFKLSLVPF), 235–255 (PAPVSTFLATASKIAIFAVVM), 271–291 (LVLSIIAVASILFGNLMAISQ), 297–317 (LLGYSSIAHLGYLLIALVAVQ), 328–348 (IGVYLAGYLFSSLGAFGVVSL), 376–396 (AVMTVMMLSLAGIPMTLGFIG), 409–428 (LWWLTGAVVLGSAIGLYYYL), and 451–471 (ALTAGGVVVLISAILVLVLGI).

It belongs to the complex I subunit 2 family. NDH-1 is composed of 13 different subunits. Subunits NuoA, H, J, K, L, M, N constitute the membrane sector of the complex.

Its subcellular location is the cell inner membrane. The catalysed reaction is a quinone + NADH + 5 H(+)(in) = a quinol + NAD(+) + 4 H(+)(out). In terms of biological role, NDH-1 shuttles electrons from NADH, via FMN and iron-sulfur (Fe-S) centers, to quinones in the respiratory chain. The immediate electron acceptor for the enzyme in this species is believed to be ubiquinone. Couples the redox reaction to proton translocation (for every two electrons transferred, four hydrogen ions are translocated across the cytoplasmic membrane), and thus conserves the redox energy in a proton gradient. This chain is NADH-quinone oxidoreductase subunit N, found in Yersinia pseudotuberculosis serotype O:1b (strain IP 31758).